The following is a 397-amino-acid chain: Autophagy-related protein 29 (397 aa).

The disordered stretch occupies residues 71 to 397; that stretch reads ATAAVRNSGP…RSRYTSSSNQ (327 aa). Acidic residues predominate over residues 230 to 240; sequence QYEDDDDDESE. The span at 245–259 shows a compositional bias: polar residues; sequence PYTSPSSKTSAQDLG. The segment covering 269–282 has biased composition (basic residues); sequence SGKRPHKSHGKPAI. Composition is skewed to basic and acidic residues over residues 300–309 and 330–341; these read KPDKTDRSTE and GGKDKGYSREGS. 2 stretches are compositionally biased toward polar residues: residues 343-363 and 381-397; these read GTPS…TQSA and FSIS…SSNQ.

Belongs to the ATG29 family. Forms a stable complex with ATG17 and ATG31. Interacts directly with ATG31. The ATG17-ATG29-ATG31 complex interacts with the ATG1-ATG13 complex. Note=The interaction with the ATG1-ATG13 complex is induced by starvation.

Its subcellular location is the preautophagosomal structure. Its function is as follows. Plays a role in autophagy. Functions at the preautophagosomal structure (PAS) in order to form normal autophagosomes under starvation conditions. Also plays a role in mitophagy. Autophagy is required for proper vegetative growth, asexual/sexual reproduction, and full virulence. Autophagy is particularly involved in the biosynthesis of deoxynivalenol (DON), an important virulence determinant. The polypeptide is Autophagy-related protein 29 (Gibberella zeae (strain ATCC MYA-4620 / CBS 123657 / FGSC 9075 / NRRL 31084 / PH-1) (Wheat head blight fungus)).